Here is a 191-residue protein sequence, read N- to C-terminus: Putative glutathione-dependent formaldehyde-activating enzyme (191 aa).

The CENP-V/GFA domain maps to 20 to 166 (FSGGTLRCHC…FKSVGLETYD (147 aa)). 7 residues coordinate Zn(2+): C27, C29, C48, C50, C53, C95, and C98.

This sequence belongs to the Gfa family. Zn(2+) is required as a cofactor.

The catalysed reaction is S-(hydroxymethyl)glutathione = glutathione + formaldehyde. The protein operates within one-carbon metabolism; formaldehyde degradation; formate from formaldehyde (glutathione route): step 1/3. Its function is as follows. Catalyzes the condensation of formaldehyde and glutathione to S-hydroxymethylglutathione. The polypeptide is Putative glutathione-dependent formaldehyde-activating enzyme (Colletotrichum graminicola (strain M1.001 / M2 / FGSC 10212) (Maize anthracnose fungus)).